The primary structure comprises 149 residues: Nucleoside diphosphate kinase (149 aa).

Residues Lys-9, Phe-57, Arg-85, Thr-91, Arg-102, and Asn-112 each coordinate ATP. His-115 (pros-phosphohistidine intermediate) is an active-site residue.

The protein belongs to the NDK family. Homotetramer. The cofactor is Mg(2+).

It localises to the cytoplasm. The catalysed reaction is a 2'-deoxyribonucleoside 5'-diphosphate + ATP = a 2'-deoxyribonucleoside 5'-triphosphate + ADP. It carries out the reaction a ribonucleoside 5'-diphosphate + ATP = a ribonucleoside 5'-triphosphate + ADP. Functionally, major role in the synthesis of nucleoside triphosphates other than ATP. The ATP gamma phosphate is transferred to the NDP beta phosphate via a ping-pong mechanism, using a phosphorylated active-site intermediate. The chain is Nucleoside diphosphate kinase from Crocosphaera subtropica (strain ATCC 51142 / BH68) (Cyanothece sp. (strain ATCC 51142)).